The following is a 306-amino-acid chain: Polyisoprenyl-teichoic acid--peptidoglycan teichoic acid transferase TagU (306 aa).

Residues 1-11 lie on the Cytoplasmic side of the membrane; it reads MRNERRKKKKT. The chain crosses the membrane as a helical; Signal-anchor for type II membrane protein span at residues 12-32; the sequence is LLLTILTIIGLLVLGTGGYAY. Over 33-306 the chain is Extracellular; it reads YLWHKAASTV…TKELKESLEK (274 aa).

This sequence belongs to the LytR/CpsA/Psr (LCP) family. Interacts with MreB. Interacts with FloT.

Its subcellular location is the cell membrane. The protein localises to the membrane raft. The protein operates within cell wall biogenesis. In terms of biological role, may catalyze the final step in cell wall teichoic acid biosynthesis, the transfer of the anionic cell wall polymers (APs) from their lipid-linked precursor to the cell wall peptidoglycan (PG). The protein is Polyisoprenyl-teichoic acid--peptidoglycan teichoic acid transferase TagU of Bacillus subtilis (strain 168).